Reading from the N-terminus, the 836-residue chain is Protein translocase subunit SecA (836 aa).

Residues glutamine 85, 103–107, and aspartate 492 contribute to the ATP site; that span reads GEGKT. Zn(2+) is bound by residues cysteine 820, cysteine 822, cysteine 831, and cysteine 832.

Belongs to the SecA family. In terms of assembly, monomer and homodimer. Part of the essential Sec protein translocation apparatus which comprises SecA, SecYEG and auxiliary proteins SecDF. Other proteins may also be involved. Zn(2+) is required as a cofactor.

It localises to the cell membrane. The protein resides in the cytoplasm. The catalysed reaction is ATP + H2O + cellular proteinSide 1 = ADP + phosphate + cellular proteinSide 2.. Functionally, part of the Sec protein translocase complex. Interacts with the SecYEG preprotein conducting channel. Has a central role in coupling the hydrolysis of ATP to the transfer of proteins into and across the cell membrane, serving as an ATP-driven molecular motor driving the stepwise translocation of polypeptide chains across the membrane. The sequence is that of Protein translocase subunit SecA from Clostridium botulinum (strain Eklund 17B / Type B).